Here is a 106-residue protein sequence, read N- to C-terminus: Small ribosomal subunit protein uS10 (106 aa).

It belongs to the universal ribosomal protein uS10 family. As to quaternary structure, part of the 30S ribosomal subunit.

Its function is as follows. Involved in the binding of tRNA to the ribosomes. The chain is Small ribosomal subunit protein uS10 from Hyphomonas neptunium (strain ATCC 15444).